The following is a 405-amino-acid chain: Argininosuccinate synthase (405 aa).

ATP contacts are provided by residues 13 to 21 and Ala-40; that span reads AYSGGLDTS. L-citrulline contacts are provided by Tyr-91 and Ser-96. Gly-121 provides a ligand contact to ATP. L-aspartate is bound by residues Thr-123, Asn-127, and Asp-128. Residue Asn-127 coordinates L-citrulline. Residues Arg-131, Ser-182, Ser-191, Glu-267, and Tyr-279 each coordinate L-citrulline.

This sequence belongs to the argininosuccinate synthase family. Type 1 subfamily. As to quaternary structure, homotetramer.

It is found in the cytoplasm. The enzyme catalyses L-citrulline + L-aspartate + ATP = 2-(N(omega)-L-arginino)succinate + AMP + diphosphate + H(+). It functions in the pathway amino-acid biosynthesis; L-arginine biosynthesis; L-arginine from L-ornithine and carbamoyl phosphate: step 2/3. This Rhizobium meliloti (strain 1021) (Ensifer meliloti) protein is Argininosuccinate synthase.